Consider the following 578-residue polypeptide: A-type ATP synthase subunit A (578 aa).

Position 228-235 (228-235) interacts with ATP; the sequence is GPFGSGKT.

The protein belongs to the ATPase alpha/beta chains family. In terms of assembly, has multiple subunits with at least A(3), B(3), C, D, E, F, G, I and proteolipid K(x).

The protein localises to the cell membrane. The enzyme catalyses ATP + H2O + 4 H(+)(in) = ADP + phosphate + 5 H(+)(out). ATP hydrolysis stimulated by sulfite, ethanol, glycerol, magnesium and zinc ions, inhibited by diethylstilbestrol (DES) and less well by N,N-dicyclohexylcarbodiimide (DCCD). Functionally, component of the A-type ATP synthase that produces ATP from ADP in the presence of a proton gradient across the membrane. The A chain is the catalytic subunit. This Methanosarcina mazei (strain ATCC BAA-159 / DSM 3647 / Goe1 / Go1 / JCM 11833 / OCM 88) (Methanosarcina frisia) protein is A-type ATP synthase subunit A.